The following is a 174-amino-acid chain: Crossover junction endodeoxyribonuclease RuvC (174 aa).

Residues D8, E67, and D139 contribute to the active site. Positions 8, 67, and 139 each coordinate Mg(2+).

It belongs to the RuvC family. Homodimer which binds Holliday junction (HJ) DNA. The HJ becomes 2-fold symmetrical on binding to RuvC with unstacked arms; it has a different conformation from HJ DNA in complex with RuvA. In the full resolvosome a probable DNA-RuvA(4)-RuvB(12)-RuvC(2) complex forms which resolves the HJ. Mg(2+) serves as cofactor.

The protein resides in the cytoplasm. It catalyses the reaction Endonucleolytic cleavage at a junction such as a reciprocal single-stranded crossover between two homologous DNA duplexes (Holliday junction).. In terms of biological role, the RuvA-RuvB-RuvC complex processes Holliday junction (HJ) DNA during genetic recombination and DNA repair. Endonuclease that resolves HJ intermediates. Cleaves cruciform DNA by making single-stranded nicks across the HJ at symmetrical positions within the homologous arms, yielding a 5'-phosphate and a 3'-hydroxyl group; requires a central core of homology in the junction. The consensus cleavage sequence is 5'-(A/T)TT(C/G)-3'. Cleavage occurs on the 3'-side of the TT dinucleotide at the point of strand exchange. HJ branch migration catalyzed by RuvA-RuvB allows RuvC to scan DNA until it finds its consensus sequence, where it cleaves and resolves the cruciform DNA. The protein is Crossover junction endodeoxyribonuclease RuvC of Pseudomonas putida (strain ATCC 47054 / DSM 6125 / CFBP 8728 / NCIMB 11950 / KT2440).